We begin with the raw amino-acid sequence, 204 residues long: ATP phosphoribosyltransferase (204 aa).

Belongs to the ATP phosphoribosyltransferase family. Short subfamily. In terms of assembly, heteromultimer composed of HisG and HisZ subunits.

The protein localises to the cytoplasm. The enzyme catalyses 1-(5-phospho-beta-D-ribosyl)-ATP + diphosphate = 5-phospho-alpha-D-ribose 1-diphosphate + ATP. Its pathway is amino-acid biosynthesis; L-histidine biosynthesis; L-histidine from 5-phospho-alpha-D-ribose 1-diphosphate: step 1/9. Catalyzes the condensation of ATP and 5-phosphoribose 1-diphosphate to form N'-(5'-phosphoribosyl)-ATP (PR-ATP). Has a crucial role in the pathway because the rate of histidine biosynthesis seems to be controlled primarily by regulation of HisG enzymatic activity. This chain is ATP phosphoribosyltransferase, found in Staphylococcus aureus (strain USA300).